Consider the following 197-residue polypeptide: Phospholipid hydroperoxide glutathione peroxidase (197 aa).

Ser-40 is modified (phosphoserine). The active site involves Sec-73. Residue Sec-73 is a non-standard amino acid, selenocysteine.

It belongs to the glutathione peroxidase family. In terms of assembly, monomer. Has a tendency to form higher mass oligomers. Interacts with FUNDC1; this interaction promotes GPX4 recruitment into mitochondria through TOM/TIM complex where it is degraded by mitophagy.

It is found in the mitochondrion. The protein resides in the cytoplasm. The enzyme catalyses a hydroperoxy polyunsaturated fatty acid + 2 glutathione = a hydroxy polyunsaturated fatty acid + glutathione disulfide + H2O. The catalysed reaction is 2 glutathione + H2O2 = glutathione disulfide + 2 H2O. It catalyses the reaction tert-butyl hydroperoxide + 2 glutathione = tert-butanol + glutathione disulfide + H2O. It carries out the reaction cumene hydroperoxide + 2 glutathione = 2-phenylpropan-2-ol + glutathione disulfide + H2O. The enzyme catalyses (9S)-hydroperoxy-(10E,12Z)-octadecadienoate + 2 glutathione = (9S)-hydroxy-(10E,12Z)-octadecadienoate + glutathione disulfide + H2O. The catalysed reaction is (13S)-hydroperoxy-(9Z,11E)-octadecadienoate + 2 glutathione = (13S)-hydroxy-(9Z,11E)-octadecadienoate + glutathione disulfide + H2O. It catalyses the reaction (5S)-hydroperoxy-(6E,8Z,11Z,14Z)-eicosatetraenoate + 2 glutathione = (5S)-hydroxy-(6E,8Z,11Z,14Z)-eicosatetraenoate + glutathione disulfide + H2O. It carries out the reaction (12R)-hydroperoxy-(5Z,8Z,10E,14Z)-eicosatetraenoate + 2 glutathione = (12R)-hydroxy-(5Z,8Z,10E,14Z)-eicosatetraenoate + glutathione disulfide + H2O. The enzyme catalyses (12S)-hydroperoxy-(5Z,8Z,10E,14Z)-eicosatetraenoate + 2 glutathione = (12S)-hydroxy-(5Z,8Z,10E,14Z)-eicosatetraenoate + glutathione disulfide + H2O. The catalysed reaction is (15S)-hydroperoxy-(5Z,8Z,11Z,13E)-eicosatetraenoate + 2 glutathione = (15S)-hydroxy-(5Z,8Z,11Z,13E)-eicosatetraenoate + glutathione disulfide + H2O. It catalyses the reaction (5S)-hydroperoxy-(6E,8Z,11Z,14Z,17Z)-eicosapentaenoate + 2 glutathione = (5S)-hydroxy-(6E,8Z,11Z,14Z,17Z)-eicosapentaenoate + glutathione disulfide + H2O. It carries out the reaction (12S)-hydroperoxy-(5Z,8Z,10E,14Z,17Z)-eicosapentaenoate + 2 glutathione = (12S)-hydroxy-(5Z,8Z,10E,14Z,17Z)-eicosapentaenoate + glutathione disulfide + H2O. The enzyme catalyses (15S)-hydroperoxy-(5Z,8Z,11Z,13E,17Z)-eicosapentaenoate + 2 glutathione = (15S)-hydroxy-(5Z,8Z,11Z,13E,17Z)-eicosapentaenoate + glutathione disulfide + H2O. The catalysed reaction is (15S)-hydroperoxy-(11Z,13E)-eicosadienoate + 2 glutathione = (15S)-hydroxy-(11Z,13E)-eicosadienoate + glutathione disulfide + H2O. It catalyses the reaction (17S)-hydroperoxy-(4Z,7Z,10Z,13Z,15E,19Z)-docosahexaenoate + 2 glutathione = (17S)-hydroxy-(4Z,7Z,10Z,13Z,15E,19Z)-docosahexaenoate + glutathione disulfide + H2O. It carries out the reaction a hydroperoxy-1,2-diacyl-glycero-3-phosphocholine + 2 glutathione = a hydroxy-1,2-diacyl-glycero-3-phosphocholine + glutathione disulfide + H2O. Its function is as follows. Essential antioxidant peroxidase that directly reduces phospholipid hydroperoxide even if they are incorporated in membranes and lipoproteins. Can also reduce fatty acid hydroperoxide, cholesterol hydroperoxide and thymine hydroperoxide. Plays a key role in protecting cells from oxidative damage by preventing membrane lipid peroxidation. Required to prevent cells from ferroptosis, a non-apoptotic cell death resulting from an iron-dependent accumulation of lipid reactive oxygen species. The presence of selenocysteine (Sec) versus Cys at the active site is essential for life: it provides resistance to overoxidation and prevents cells against ferroptosis. The presence of Sec at the active site is also essential for the survival of a specific type of parvalbumin-positive interneurons, thereby preventing against fatal epileptic seizures. May be required to protect cells from the toxicity of ingested lipid hydroperoxides. Required for normal sperm development and male fertility. Essential for maturation and survival of photoreceptor cells. Plays a role in a primary T-cell response to viral and parasitic infection by protecting T-cells from ferroptosis and by supporting T-cell expansion. Plays a role of glutathione peroxidase in platelets in the arachidonic acid metabolism. Reduces hydroperoxy ester lipids formed by a 15-lipoxygenase that may play a role as down-regulator of the cellular 15-lipoxygenase pathway. Can also reduce small soluble hydroperoxides such as H2O2, cumene hydroperoxide and tert-butyl hydroperoxide. This chain is Phospholipid hydroperoxide glutathione peroxidase, found in Pongo pygmaeus (Bornean orangutan).